Reading from the N-terminus, the 625-residue chain is DNA mismatch repair protein MutL (625 aa).

Belongs to the DNA mismatch repair MutL/HexB family.

This protein is involved in the repair of mismatches in DNA. It is required for dam-dependent methyl-directed DNA mismatch repair. May act as a 'molecular matchmaker', a protein that promotes the formation of a stable complex between two or more DNA-binding proteins in an ATP-dependent manner without itself being part of a final effector complex. The protein is DNA mismatch repair protein MutL of Azorhizobium caulinodans (strain ATCC 43989 / DSM 5975 / JCM 20966 / LMG 6465 / NBRC 14845 / NCIMB 13405 / ORS 571).